An 815-amino-acid chain; its full sequence is Phenylalanine--tRNA ligase beta subunit (815 aa).

The 115-residue stretch at 39 to 153 folds into the tRNA-binding domain; that stretch reads ASHAQGVVVG…NVPDLGQPVG (115 aa). The 85-residue stretch at 414–498 folds into the B5 domain; that stretch reads KSAEPVKLRR…RLVGFDRFEA (85 aa). Residues Asp-476, Asp-482, Glu-485, and Glu-486 each coordinate Mg(2+). Positions 721–814 constitute an FDX-ACB domain; that stretch reads PTVPAMELDL…LVKQFSAELR (94 aa).

The protein belongs to the phenylalanyl-tRNA synthetase beta subunit family. Type 1 subfamily. Tetramer of two alpha and two beta subunits. Requires Mg(2+) as cofactor.

The protein resides in the cytoplasm. It carries out the reaction tRNA(Phe) + L-phenylalanine + ATP = L-phenylalanyl-tRNA(Phe) + AMP + diphosphate + H(+). The sequence is that of Phenylalanine--tRNA ligase beta subunit from Prochlorococcus marinus (strain MIT 9313).